The chain runs to 228 residues: Large ribosomal subunit protein bL25 (228 aa).

The interval 1-24 is disordered; it reads MATVMELKATARPKSGKGAARAER.

It belongs to the bacterial ribosomal protein bL25 family. CTC subfamily. Part of the 50S ribosomal subunit; part of the 5S rRNA/L5/L18/L25 subcomplex. Contacts the 5S rRNA. Binds to the 5S rRNA independently of L5 and L18.

In terms of biological role, this is one of the proteins that binds to the 5S RNA in the ribosome where it forms part of the central protuberance. This chain is Large ribosomal subunit protein bL25, found in Nitrobacter winogradskyi (strain ATCC 25391 / DSM 10237 / CIP 104748 / NCIMB 11846 / Nb-255).